The following is a 334-amino-acid chain: G-protein coupled receptor 12 (334 aa).

The Extracellular portion of the chain corresponds to M1–D48. N-linked (GlcNAc...) asparagine glycosylation is found at N8 and N24. A helical membrane pass occupies residues I49–I69. Residues F70 to A77 are Cytoplasmic-facing. A helical membrane pass occupies residues P78–I98. The Extracellular segment spans residues T99 to K113. Residues L114–I134 form a helical membrane-spanning segment. Residues T135–Y158 are Cytoplasmic-facing. A helical transmembrane segment spans residues V159 to W179. The Extracellular portion of the chain corresponds to N180–A199. A helical membrane pass occupies residues A200 to I220. Over C221–T252 the chain is Cytoplasmic. A helical transmembrane segment spans residues L253 to I273. Residues A274–Y282 lie on the Extracellular side of the membrane. A helical membrane pass occupies residues T283–F303. Topologically, residues R304–V334 are cytoplasmic. C317 is lipidated: S-palmitoyl cysteine. Residues S330 and S332 each carry the phosphoserine modification.

Belongs to the G-protein coupled receptor 1 family.

Its subcellular location is the cell membrane. In terms of biological role, promotes neurite outgrowth and blocks myelin inhibition in neurons. Receptor with constitutive G(s) signaling activity that stimulates cyclic AMP production. The protein is G-protein coupled receptor 12 (GPR12) of Homo sapiens (Human).